Here is a 547-residue protein sequence, read N- to C-terminus: Vacuolar fusion protein MON1 homolog B (547 aa).

The residue at position 1 (M1) is an N-acetylmethionine. Over residues 1–15 the composition is skewed to low complexity; that stretch reads MEVGGDTAAPAPGGA. The segment at 1-106 is disordered; sequence MEVGGDTAAP…GGDPSDEEWR (106 aa). 2 positions are modified to phosphoserine: S59 and S61.

It belongs to the MON1/SAND family. Interacts with CCNT2; down-regulates CCNT2-mediated activation of viral promoters during herpes simplex virus 1/HHV-1 infection. Found in a complex with RMC1, CCZ1 MON1A and MON1B.

This chain is Vacuolar fusion protein MON1 homolog B (MON1B), found in Homo sapiens (Human).